A 211-amino-acid chain; its full sequence is MAKVLYITAHPHDEKTSYSMATGKAFIDSYKESNPNDEVVHIDLYKENIPHIDADVFSGWGKLQSGTGFEELSENEKAKVGRLNELSDQFAAADKYVFVTPLWNFSFPPVMKAYLDSVAVAGKSFKYTEQGPIGLLTDKKALHIQARGGYYSEGPAADMEMGHRYIGIMMNFFGVPSFDGLIVEGHNAEPNKAQQIKEDAIARAKEAGKSF.

17 to 19 (SYS) contributes to the FMN binding site.

It belongs to the azoreductase type 1 family. In terms of assembly, homodimer. It depends on FMN as a cofactor.

It catalyses the reaction 2 a quinone + NADH + H(+) = 2 a 1,4-benzosemiquinone + NAD(+). The enzyme catalyses N,N-dimethyl-1,4-phenylenediamine + anthranilate + 2 NAD(+) = 2-(4-dimethylaminophenyl)diazenylbenzoate + 2 NADH + 2 H(+). In terms of biological role, quinone reductase that provides resistance to thiol-specific stress caused by electrophilic quinones. Functionally, also exhibits azoreductase activity. Catalyzes the reductive cleavage of the azo bond in aromatic azo compounds to the corresponding amines. The chain is FMN-dependent NADH:quinone oxidoreductase from Bacillus velezensis (strain DSM 23117 / BGSC 10A6 / LMG 26770 / FZB42) (Bacillus amyloliquefaciens subsp. plantarum).